The following is a 694-amino-acid chain: Cyclic nucleotide-gated ion channel 4 (694 aa).

Residues 1 to 15 (MATEQEFTRASRFSR) are compositionally biased toward basic and acidic residues. Positions 1-64 (MATEQEFTRA…RIGLTCGGRR (64 aa)) are disordered. At 1–92 (MATEQEFTRA…RSKWVREWNK (92 aa)) the chain is on the cytoplasmic side. The span at 24–53 (SEEDNTEEEDEEEEEMEEIEEEEEEEEEED) shows a compositional bias: acidic residues. Residues 93 to 113 (VFLLVCATGLFVDPLFLYTLS) form a helical membrane-spanning segment. Over 114-126 (VSDTCMCLLVDGW) the chain is Extracellular. The helical transmembrane segment at 127–147 (LALTVTALRSMTDLLHLWNIW) threads the bilayer. Topologically, residues 148–187 (IQFKIARRWPYPGGDSDGDTNKGGGTRGSTRVAPPYVKKN) are cytoplasmic. The chain crosses the membrane as a helical span at residues 188–208 (GFFFDLFVILPLPQVVLWVVI). Residues 209–216 (PSLLKRGS) are Extracellular-facing. A helical membrane pass occupies residues 217-237 (VTLVVSVLLVTFLFQYLPKIY). Over 238-251 (HSIRHLRRNATLSG) the chain is Cytoplasmic. The helical transmembrane segment at 252–272 (YIFGTVWWGIALNMIAYFVAA) threads the bilayer. The Extracellular segment spans residues 273–392 (HAAGACWYLL…LESTTEWSEV (120 aa)). Residues 393–413 (VFNIIVLTSGLLLVTMLIGNI) traverse the membrane as a helical segment. Residues 414–694 (KVFLHATTSK…KPNPDDFDDY (281 aa)) are Cytoplasmic-facing. A nucleoside 3',5'-cyclic phosphate-binding positions include 496–626 (LFQH…ARYY) and Asp-565. Residues 610 to 626 (FRYTFVNEKVKRSARYY) form a calmodulin-binding region. An IQ domain is found at 631-660 (RTWAAVAVQLAWRRYKHRLTLTSLSFIRPR).

The protein belongs to the cyclic nucleotide-gated cation channel (TC 1.A.1.5) family. Homotetramer or heterotetramer.

It is found in the cell membrane. In terms of biological role, acts as a cyclic nucleotide-gated ion channel. Permeable to potassium and sodium in a cyclic nucleotide-dependent fashion (cAMP or cGMP). Might constitute a common downstream component of the signaling pathways leading to hypersensitive response (HR). The chain is Cyclic nucleotide-gated ion channel 4 (CNGC4) from Arabidopsis thaliana (Mouse-ear cress).